Reading from the N-terminus, the 468-residue chain is Adenosylhomocysteinase (468 aa).

Threonine 57, aspartate 132, and glutamate 194 together coordinate substrate. Threonine 195–threonine 197 provides a ligand contact to NAD(+). Substrate-binding residues include lysine 224 and aspartate 228. NAD(+)-binding positions include asparagine 229, glycine 258–glycine 263, glutamate 281, asparagine 316, isoleucine 337–histidine 339, and asparagine 382.

The protein belongs to the adenosylhomocysteinase family. NAD(+) serves as cofactor.

It localises to the cytoplasm. It catalyses the reaction S-adenosyl-L-homocysteine + H2O = L-homocysteine + adenosine. It participates in amino-acid biosynthesis; L-homocysteine biosynthesis; L-homocysteine from S-adenosyl-L-homocysteine: step 1/1. Functionally, may play a key role in the regulation of the intracellular concentration of adenosylhomocysteine. The chain is Adenosylhomocysteinase from Methylorubrum populi (strain ATCC BAA-705 / NCIMB 13946 / BJ001) (Methylobacterium populi).